The following is a 285-amino-acid chain: Complex I assembly factor TIMMDC1, mitochondrial (285 aa).

Transmembrane regions (helical) follow at residues A80–A100, R137–Y159, M165–V185, and L188–A208. The tract at residues R265–H285 is disordered. Residues R274–H285 show a composition bias toward polar residues. At S277 the chain carries Phosphoserine.

The protein belongs to the Tim17/Tim22/Tim23 family. As to quaternary structure, associates with the intermediate 315 kDa subcomplex of incompletely assembled complex I. Interacts with TMEM70.

It is found in the mitochondrion membrane. In terms of biological role, chaperone protein involved in the assembly of the mitochondrial NADH:ubiquinone oxidoreductase complex (complex I). Participates in constructing the membrane arm of complex I. The protein is Complex I assembly factor TIMMDC1, mitochondrial of Mus musculus (Mouse).